The sequence spans 136 residues: Histone H3.3C (136 aa).

The disordered stretch occupies residues 1 to 42; the sequence is MARTKQTARKSTGGKAPRKQLVTKAAKKCAPATGGVKKPHRY. Arg3 is subject to Asymmetric dimethylarginine; by PRMT6. A Phosphothreonine; by HASPIN modification is found at Thr4. The residue at position 5 (Lys5) is an Allysine; alternate. An N6,N6,N6-trimethyllysine; alternate modification is found at Lys5. At Lys5 the chain carries N6,N6-dimethyllysine; alternate. N6-(2-hydroxyisobutyryl)lysine; alternate is present on Lys5. Lys5 is modified (N6-acetyllysine; alternate). Lys5 bears the N6-methyllysine; alternate mark. Gln6 bears the 5-glutamyl dopamine; alternate mark. Gln6 is modified (5-glutamyl serotonin; alternate). Thr7 carries the post-translational modification Phosphothreonine; by PKC. Lys10 bears the N6-(2-hydroxyisobutyryl)lysine; alternate mark. Position 10 is an N6-lactoyllysine; alternate (Lys10). At Lys10 the chain carries N6-methylated lysine. Ser11 is modified (ADP-ribosylserine; alternate). The residue at position 11 (Ser11) is a Phosphoserine; alternate; by AURKB, AURKC, RPS6KA3, RPS6KA4 and RPS6KA5. At Thr12 the chain carries Phosphothreonine; by PKC. An N6-(2-hydroxyisobutyryl)lysine; alternate modification is found at Lys15. Position 15 is an N6-lactoyllysine; alternate (Lys15). Lys15 carries the N6-acetyllysine modification. Lys15 carries the post-translational modification N6-glutaryllysine; alternate. Arg18 carries the asymmetric dimethylarginine modification. N6-(2-hydroxyisobutyryl)lysine; alternate is present on residues Lys19, Lys24, Lys28, and Lys37. The residue at position 19 (Lys19) is an N6-acetyllysine; alternate. 3 positions are modified to N6-lactoyllysine; alternate: Lys19, Lys24, and Lys28. An N6-glutaryllysine; alternate mark is found at Lys19, Lys24, and Lys28. N6-butyryllysine; alternate occurs at positions 19 and 24. At Lys19 the chain carries N6-methylated lysine; alternate. Residue Lys24 is modified to N6-acetyllysine. N6-acetyllysine; alternate is present on residues Lys28 and Lys37. Residues Lys28 and Lys37 each carry the N6-methylated lysine; alternate modification. The residue at position 42 (Tyr42) is a Phosphotyrosine. Lys57 is modified (N6-(2-hydroxyisobutyryl)lysine; alternate). Residue Lys57 is modified to N6-lactoyllysine; alternate. N6-glutaryllysine; alternate is present on Lys57. At Lys57 the chain carries N6-succinyllysine; alternate. Phosphoserine is present on Ser58. An N6-(2-hydroxyisobutyryl)lysine; alternate mark is found at Lys65 and Lys80. An N6-methylated lysine mark is found at Lys65 and Lys80. An N6-lactoyllysine; alternate modification is found at Lys80. Lys80 carries the N6-glutaryllysine; alternate modification. N6-succinyllysine; alternate is present on Lys80. Residue Thr81 is modified to Phosphothreonine. An N6-acetyllysine; alternate mark is found at Lys116 and Lys123. N6-glutaryllysine; alternate occurs at positions 116 and 123. N6-(2-hydroxyisobutyryl)lysine; alternate is present on Lys123. At Lys123 the chain carries N6-methylated lysine; alternate. Residue Lys123 is modified to N6-succinyllysine; alternate.

The protein belongs to the histone H3 family. The nucleosome is a histone octamer containing two molecules each of H2A, H2B, H3 and H4 assembled in one H3-H4 heterotetramer and two H2A-H2B heterodimers. The octamer wraps approximately 147 bp of DNA. In terms of processing, acetylation is generally linked to gene activation. Acetylation on Lys-19 (H3K18ac) and Lys-24 (H3K24ac) favors methylation at Arg-18 (H3R17me). Acetylation at Lys-123 (H3K122ac) by EP300/p300 plays a central role in chromatin structure: localizes at the surface of the histone octamer and stimulates transcription, possibly by promoting nucleosome instability. Asymmetric dimethylation at Arg-18 (H3R17me2a) is linked to gene activation. Asymmetric dimethylation at Arg-3 (H3R2me2a) by PRMT6 is linked to gene repression and is mutually exclusive with H3 Lys-5 methylation (H3K4me2 and H3K4me3). H3R2me2a is present at the 3' of genes regardless of their transcription state and is enriched on inactive promoters, while it is absent on active promoters. Post-translationally, methylation at Lys-5 (H3K4me) and Lys-80 (H3K79me) are linked to gene activation. Methylation at Lys-5 (H3K4me) facilitates subsequent acetylation of H3 and H4. Methylation at Lys-80 (H3K79me) is associated with DNA double-strand break (DSB) responses and is a specific target for TP53BP1. Methylation at Lys-10 (H3K9me) and Lys-28 (H3K27me) are linked to gene repression. Methylation at Lys-10 (H3K9me) is a specific target for HP1 proteins (CBX1, CBX3 and CBX5) and prevents subsequent phosphorylation at Ser-11 (H3S10ph) and acetylation of H3 and H4. Methylation at Lys-5 (H3K4me) and Lys-80 (H3K79me) require preliminary monoubiquitination of H2B at 'Lys-120'. In terms of processing, phosphorylated at Thr-4 (H3T3ph) by HASPIN during prophase and dephosphorylated during anaphase. Phosphorylation at Ser-11 (H3S10ph) by aurkb is crucial for chromosome condensation and cell-cycle progression during mitosis and meiosis. In addition phosphorylation at Ser-11 (H3S10ph) by rps6ka4 and rps6ka5 is important during interphase because it enables the transcription of genes following external stimulation, like mitogens, stress, growth factors or UV irradiation and result in the activation of genes, such as c-fos and c-jun. Phosphorylation at Ser-11 (H3S10ph), which is linked to gene activation, prevents methylation at Lys-10 (H3K9me) but facilitates acetylation of H3 and H4. Phosphorylation at Ser-11 (H3S10ph) by aurkb mediates the dissociation of HP1 proteins (cbx1, cbx3 and cbx5) from heterochromatin. Phosphorylation at Ser-11 (H3S10ph) is also an essential regulatory mechanism for neoplastic cell transformation. Phosphorylation at Thr-7 (H3T6ph) by prkcb is a specific tag for epigenetic transcriptional activation that prevents demethylation of Lys-5 (H3K4me) by lsd1/kdm1a. At centromeres, specifically phosphorylated at Thr-12 (H3T11ph) from prophase to early anaphase, by DAPK3 and PKN1. Phosphorylation at Thr-12 (H3T11ph) by PKN1 or isoform M2 of PKM (PKM2) is a specific tag for epigenetic transcriptional activation that promotes demethylation of Lys-10 (H3K9me) by kdm4c/jmjd2c. Phosphorylation at Tyr-42 (H3Y41ph) by jak2 promotes exclusion of cbx5 (HP1 alpha) from chromatin. Lysine deamination at Lys-5 (H3K4all) to form allysine only takes place on H3K4me3 and results in gene repression. Post-translationally, butyrylation of histones marks active promoters and competes with histone acetylation. It is present during late spermatogenesis. In terms of processing, succinylation at Lys-80 (H3K79succ) by KAT2A takes place with a maximum frequency around the transcription start sites of genes. It gives a specific tag for epigenetic transcription activation. Desuccinylation at Lys-123 (H3K122succ) by SIRT7 in response to DNA damage promotes chromatin condensation and double-strand breaks (DSBs) repair. Serine ADP-ribosylation constitutes the primary form of ADP-ribosylation of proteins in response to DNA damage. Serine ADP-ribosylation at Ser-11 (H3S10ADPr) is mutually exclusive with phosphorylation at Ser-11 (H3S10ph) and impairs acetylation at Lys-10 (H3K9ac).

The protein resides in the nucleus. It localises to the chromosome. In terms of biological role, core component of nucleosome. Nucleosomes wrap and compact DNA into chromatin, limiting DNA accessibility to the cellular machineries which require DNA as a template. Histones thereby play a central role in transcription regulation, DNA repair, DNA replication and chromosomal stability. DNA accessibility is regulated via a complex set of post-translational modifications of histones, also called histone code, and nucleosome remodeling. In Xenopus laevis (African clawed frog), this protein is Histone H3.3C (h3-5).